Reading from the N-terminus, the 215-residue chain is Large ribosomal subunit protein uL3 (215 aa).

The tract at residues 136 to 161 (GVSISHRSHGSTGQRQDPGKVFKGKK) is disordered. N5-methylglutamine is present on Gln-151.

This sequence belongs to the universal ribosomal protein uL3 family. Part of the 50S ribosomal subunit. Forms a cluster with proteins L14 and L19. Post-translationally, methylated by PrmB.

In terms of biological role, one of the primary rRNA binding proteins, it binds directly near the 3'-end of the 23S rRNA, where it nucleates assembly of the 50S subunit. In Rickettsia akari (strain Hartford), this protein is Large ribosomal subunit protein uL3.